Reading from the N-terminus, the 258-residue chain is Trans-aconitate 2-methyltransferase (258 aa).

Belongs to the methyltransferase superfamily. Tam family.

It localises to the cytoplasm. It catalyses the reaction trans-aconitate + S-adenosyl-L-methionine = (E)-3-(methoxycarbonyl)pent-2-enedioate + S-adenosyl-L-homocysteine. Its function is as follows. Catalyzes the S-adenosylmethionine monomethyl esterification of trans-aconitate. This Deinococcus radiodurans (strain ATCC 13939 / DSM 20539 / JCM 16871 / CCUG 27074 / LMG 4051 / NBRC 15346 / NCIMB 9279 / VKM B-1422 / R1) protein is Trans-aconitate 2-methyltransferase.